We begin with the raw amino-acid sequence, 207 residues long: Ribosomal RNA small subunit methyltransferase G (207 aa).

Residues G76, Q81, 127 to 128 (VE), and R141 each bind S-adenosyl-L-methionine.

Belongs to the methyltransferase superfamily. RNA methyltransferase RsmG family.

Its subcellular location is the cytoplasm. The enzyme catalyses guanosine(527) in 16S rRNA + S-adenosyl-L-methionine = N(7)-methylguanosine(527) in 16S rRNA + S-adenosyl-L-homocysteine. Functionally, specifically methylates the N7 position of guanine in position 527 of 16S rRNA. This Neisseria meningitidis serogroup C / serotype 2a (strain ATCC 700532 / DSM 15464 / FAM18) protein is Ribosomal RNA small subunit methyltransferase G.